The sequence spans 178 residues: Small ribosomal subunit protein uS4 (178 aa).

The S4 RNA-binding domain maps to R104–H166. A disordered region spans residues N158 to Q178.

Belongs to the universal ribosomal protein uS4 family. As to quaternary structure, part of the 30S ribosomal subunit. Contacts protein S5. The interaction surface between S4 and S5 is involved in control of translational fidelity.

One of the primary rRNA binding proteins, it binds directly to 16S rRNA where it nucleates assembly of the body of the 30S subunit. Its function is as follows. With S5 and S12 plays an important role in translational accuracy. The chain is Small ribosomal subunit protein uS4 from Methanococcus maripaludis (strain C6 / ATCC BAA-1332).